The chain runs to 481 residues: Glycogen synthase (481 aa).

Residue lysine 16 coordinates ADP-alpha-D-glucose.

This sequence belongs to the glycosyltransferase 1 family. Bacterial/plant glycogen synthase subfamily.

The catalysed reaction is [(1-&gt;4)-alpha-D-glucosyl](n) + ADP-alpha-D-glucose = [(1-&gt;4)-alpha-D-glucosyl](n+1) + ADP + H(+). It participates in glycan biosynthesis; glycogen biosynthesis. Synthesizes alpha-1,4-glucan chains using ADP-glucose. The sequence is that of Glycogen synthase from Lacticaseibacillus casei (strain BL23) (Lactobacillus casei).